A 418-amino-acid polypeptide reads, in one-letter code: Glutamyl-tRNA reductase (418 aa).

Substrate contacts are provided by residues 49–52, Ser-107, 112–114, and Gln-118; these read TCNR and EPQ. Residue Cys-50 is the Nucleophile of the active site. An NADP(+)-binding site is contributed by 187 to 192; it reads GAGETI.

Belongs to the glutamyl-tRNA reductase family. As to quaternary structure, homodimer.

The catalysed reaction is (S)-4-amino-5-oxopentanoate + tRNA(Glu) + NADP(+) = L-glutamyl-tRNA(Glu) + NADPH + H(+). Its pathway is porphyrin-containing compound metabolism; protoporphyrin-IX biosynthesis; 5-aminolevulinate from L-glutamyl-tRNA(Glu): step 1/2. Catalyzes the NADPH-dependent reduction of glutamyl-tRNA(Glu) to glutamate 1-semialdehyde (GSA). This Vibrio campbellii (strain ATCC BAA-1116) protein is Glutamyl-tRNA reductase.